The chain runs to 302 residues: CASP-like protein 4A2 (302 aa).

Positions 1–13 (MALQAQQQATPSP) are enriched in polar residues. The interval 1 to 134 (MALQAQQQAT…APPPHAQVRS (134 aa)) is disordered. At 1–154 (MALQAQQQAT…RKRRAAVMQR (154 aa)) the chain is on the cytoplasmic side. Over residues 40 to 60 (VVVASTHHAAAAARYVPPRAT) the composition is skewed to low complexity. Positions 99-129 (KTPPPAPPLPAAPPPPPAASPAPAPRAPPPH) are enriched in pro residues. Residues 155 to 175 (AALLARAAAAGLCLAALAVLA) form a helical membrane-spanning segment. At 176–197 (SDTRRGWARDSYSNYAQFRYSE) the chain is on the extracellular side. The helical transmembrane segment at 198-218 (AVNVVGFLYSVFQFVALAELM) threads the bilayer. The Cytoplasmic segment spans residues 219–238 (RRNKHLIPHPKRDLFDFTMD). Residues 239–256 (QVVAYLLISSSSSATARA) traverse the membrane as a helical segment. The Extracellular segment spans residues 257-273 (SDLIENWGSDSFPSMAN). A helical transmembrane segment spans residues 274-294 (GSIAISFVAFVVFAICSLISA). Residues 295 to 302 (YNLFRRDM) are Cytoplasmic-facing.

The protein belongs to the Casparian strip membrane proteins (CASP) family. In terms of assembly, homodimer and heterodimers.

The protein localises to the cell membrane. The polypeptide is CASP-like protein 4A2 (Zea mays (Maize)).